The following is a 428-amino-acid chain: Trigger factor (428 aa).

Residues 163 to 248 (GDIVDIDFEG…VNDVKVKELP (86 aa)) enclose the PPIase FKBP-type domain.

This sequence belongs to the FKBP-type PPIase family. Tig subfamily.

It localises to the cytoplasm. The enzyme catalyses [protein]-peptidylproline (omega=180) = [protein]-peptidylproline (omega=0). Functionally, involved in protein export. Acts as a chaperone by maintaining the newly synthesized protein in an open conformation. Functions as a peptidyl-prolyl cis-trans isomerase. The protein is Trigger factor of Acetivibrio thermocellus (strain ATCC 27405 / DSM 1237 / JCM 9322 / NBRC 103400 / NCIMB 10682 / NRRL B-4536 / VPI 7372) (Clostridium thermocellum).